Here is a 626-residue protein sequence, read N- to C-terminus: Chaperone protein DnaK (626 aa).

Phosphothreonine; by autocatalysis is present on Thr-197. Residues 598–612 (AQGEQGQAAQPQAET) show a composition bias toward low complexity. Residues 598–626 (AQGEQGQAAQPQAETQGDDVQDVEFEEVK) form a disordered region. A compositionally biased stretch (acidic residues) spans 613–626 (QGDDVQDVEFEEVK).

The protein belongs to the heat shock protein 70 family.

Functionally, acts as a chaperone. This Flavobacterium psychrophilum (strain ATCC 49511 / DSM 21280 / CIP 103535 / JIP02/86) protein is Chaperone protein DnaK.